The primary structure comprises 92 residues: Em-like protein GEA6 (92 aa).

2 stretches are compositionally biased toward basic and acidic residues: residues 1-18 and 37-51; these read MASQQEKKQLDERAKKGE and AEGRSRGGQTRKEQL. Residues 1–92 form a disordered region; it reads MASQQEKKQL…IDESKFRTKT (92 aa).

This sequence belongs to the small hydrophilic plant seed protein family. In terms of tissue distribution, present only in nearly dry and dry seeds.

It is thought to provide protection for the cytoplasm during the desiccation stage of embryo development. The polypeptide is Em-like protein GEA6 (EM6) (Arabidopsis thaliana (Mouse-ear cress)).